A 677-amino-acid chain; its full sequence is DNA ligase (677 aa).

Residues 32–36 (DSEYD), 81–82 (SL), and Glu-112 each bind NAD(+). Catalysis depends on Lys-114, which acts as the N6-AMP-lysine intermediate. Residues Arg-135, Glu-171, Lys-288, and Lys-312 each contribute to the NAD(+) site. Cys-416, Cys-419, Cys-434, and Cys-439 together coordinate Zn(2+). Residues 598–677 (YKPLPLSGVE…QEFINMLEQS (80 aa)) enclose the BRCT domain.

The protein belongs to the NAD-dependent DNA ligase family. LigA subfamily. Mg(2+) is required as a cofactor. The cofactor is Mn(2+).

It catalyses the reaction NAD(+) + (deoxyribonucleotide)n-3'-hydroxyl + 5'-phospho-(deoxyribonucleotide)m = (deoxyribonucleotide)n+m + AMP + beta-nicotinamide D-nucleotide.. In terms of biological role, DNA ligase that catalyzes the formation of phosphodiester linkages between 5'-phosphoryl and 3'-hydroxyl groups in double-stranded DNA using NAD as a coenzyme and as the energy source for the reaction. It is essential for DNA replication and repair of damaged DNA. The sequence is that of DNA ligase from Dehalococcoides mccartyi (strain ATCC BAA-2266 / KCTC 15142 / 195) (Dehalococcoides ethenogenes (strain 195)).